The primary structure comprises 564 residues: Lamassu protein LmuB (564 aa).

Its function is as follows. Component of antiviral defense system Lamassu type II, composed of LmuA and LmuB. Expression of Lamassu type II in B.subtilis (strain BEST7003) confers resistance to phage SpBeta. May be an ATPase. The polypeptide is Lamassu protein LmuB (Bacillus cereus (strain VD014)).